The following is a 1301-amino-acid chain: Zinc finger protein 532 (1301 aa).

3 disordered regions span residues 26–206 (PKAA…RETE), 223–266 (AEDK…SSSK), and 281–366 (KAAS…IKTI). Over residues 32–52 (SGHDDHESHMKQNAHGEDDSH) the composition is skewed to basic and acidic residues. Residues 84–101 (PTGNGLHNGFLTASSLDS) show a composition bias toward polar residues. Over residues 102–111 (YSKDGAKSLK) the composition is skewed to basic and acidic residues. The segment covering 122 to 133 (KDSTFSQFSPIS) has biased composition (polar residues). Phosphoserine occurs at positions 130, 133, and 134. The segment covering 136 to 151 (EEFDDDEKIEVDDPPD) has biased composition (acidic residues). Residues 158–170 (SFRSNVLTGSAPQ) are compositionally biased toward polar residues. The residue at position 175 (K175) is an N6-acetyllysine. The span at 182 to 195 (ENSSKTGLSTSGNV) shows a compositional bias: polar residues. 2 stretches are compositionally biased toward basic and acidic residues: residues 196–206 (EKNKAVKRETE) and 223–250 (AEDK…EKND). Residue T205 is modified to Phosphothreonine. A phosphoserine mark is found at S252, S307, and S314. The span at 303-315 (EVNDSPRAADKSP) shows a compositional bias: basic and acidic residues. Low complexity predominate over residues 337–359 (SISSENSSKGSPSSPAGSTPAIP). S434 carries the phosphoserine modification. Residues K459 and K516 each participate in a glycyl lysine isopeptide (Lys-Gly) (interchain with G-Cter in SUMO2) cross-link. A C2H2-type 1; degenerate zinc finger spans residues 616–635 (YKCLECGDSFALEKSLTQHY). Residues 754–779 (LKCLECNEVFQDETSLATHFQQAADT) form a C2H2-type 2; degenerate zinc finger. 5 consecutive C2H2-type zinc fingers follow at residues 783-805 (KTCT…QRIH), 842-865 (FRCV…QGSH), 870-893 (YKCP…YTQH), 905-927 (YKCS…FDQH), and 936-959 (FKCP…KSMH). K980 participates in a covalent cross-link: Glycyl lysine isopeptide (Lys-Gly) (interchain with G-Cter in SUMO2). The tract at residues 983-1017 (TQNSANQNKEDTKSMNGKEKLEKKSPSPVKKSMET) is disordered. A compositionally biased stretch (basic and acidic residues) spans 990–1017 (NKEDTKSMNGKEKLEKKSPSPVKKSMET). 2 C2H2-type zinc fingers span residues 1025-1048 (WTCW…RKEH) and 1055-1078 (HPCR…RIKH). The C2H2-type 10; degenerate zinc finger occupies 1085 to 1111 (YACSHCPDSRRTFTKRLMLEKHVQLMH). S1140 carries the phosphoserine modification. Glycyl lysine isopeptide (Lys-Gly) (interchain with G-Cter in SUMO2) cross-links involve residues K1144 and K1167. A C2H2-type 11 zinc finger spans residues 1203-1226 (YQCRECGLCYTSHVSLSRHLFIVH). Positions 1230–1263 (EPQPVSKQNGAGEDNQQENKPSHEDESPDGAVSD) are disordered. The C2H2-type 12 zinc finger occupies 1264–1286 (RKCKVCAKTFETEAALNTHMRTH).

This sequence belongs to the krueppel C2H2-type zinc-finger protein family.

Its subcellular location is the nucleus. In terms of biological role, may be involved in transcriptional regulation. The chain is Zinc finger protein 532 (ZNF532) from Homo sapiens (Human).